The primary structure comprises 189 residues: GTPase NRas (189 aa).

Residues 10–18 (GAGGVGKSA) and 29–30 (VD) each bind GTP. The Effector region signature appears at 32 to 40 (YDPTIEDSY). 57–61 (DTAGQ) is a binding site for GTP. Residue Ser89 is modified to Phosphoserine. 116–119 (NKCD) serves as a coordination point for GTP. The segment at 166–185 (YRLKKLNSSDDGTQGCMGSP) is hypervariable region. Lys170 participates in a covalent cross-link: Glycyl lysine isopeptide (Lys-Gly) (interchain with G-Cter in ubiquitin). Cys181 carries S-palmitoyl cysteine lipidation. A lipid anchor (S-farnesyl cysteine) is attached at Cys186. Positions 187–189 (VLM) are cleaved as a propeptide — removed in mature form.

This sequence belongs to the small GTPase superfamily. Ras family. As to quaternary structure, interacts (active GTP-bound form preferentially) with RGS14. Interacts (active GTP-bound form) with RASSF7. Interacts (active GTP-bound form) with both SHOC2 and PP1c (all isoforms) to form a tertiary complex; SHOC2 and PP1c preferably bind M-Ras/MRAS, but they also bind K-Ras/KRAS, N-Ras/NRAS and H-Ras/HRAS. Post-translationally, palmitoylated by the ZDHHC9-GOLGA7 complex. Depalmitoylated by ABHD17A, ABHD17B and ABHD17C. A continuous cycle of de- and re-palmitoylation regulates rapid exchange between plasma membrane and Golgi. In terms of processing, acetylation at Lys-104 prevents interaction with guanine nucleotide exchange factors (GEFs). Ubiquitinated by the BCR(LZTR1) E3 ubiquitin ligase complex at Lys-170 in a non-degradative manner, leading to inhibit Ras signaling by decreasing Ras association with membranes. Post-translationally, phosphorylation at Ser-89 enhances NRAS association with its downstream effectors.

The protein resides in the cell membrane. It is found in the golgi apparatus membrane. The enzyme catalyses GTP + H2O = GDP + phosphate + H(+). Alternates between an inactive form bound to GDP and an active form bound to GTP. Activated by a guanine nucleotide-exchange factor (GEF) and inactivated by a GTPase-activating protein (GAP). In terms of biological role, ras proteins bind GDP/GTP and possess intrinsic GTPase activity. This is GTPase NRas (Nras) from Mus musculus (Mouse).